Here is a 158-residue protein sequence, read N- to C-terminus: NAD(P)H-quinone oxidoreductase subunit J, chloroplastic (158 aa).

It belongs to the complex I 30 kDa subunit family. NDH is composed of at least 16 different subunits, 5 of which are encoded in the nucleus.

Its subcellular location is the plastid. It is found in the chloroplast thylakoid membrane. It carries out the reaction a plastoquinone + NADH + (n+1) H(+)(in) = a plastoquinol + NAD(+) + n H(+)(out). The catalysed reaction is a plastoquinone + NADPH + (n+1) H(+)(in) = a plastoquinol + NADP(+) + n H(+)(out). In terms of biological role, NDH shuttles electrons from NAD(P)H:plastoquinone, via FMN and iron-sulfur (Fe-S) centers, to quinones in the photosynthetic chain and possibly in a chloroplast respiratory chain. The immediate electron acceptor for the enzyme in this species is believed to be plastoquinone. Couples the redox reaction to proton translocation, and thus conserves the redox energy in a proton gradient. The sequence is that of NAD(P)H-quinone oxidoreductase subunit J, chloroplastic from Solanum bulbocastanum (Wild potato).